Here is a 278-residue protein sequence, read N- to C-terminus: Indole-3-glycerol phosphate synthase (278 aa).

This sequence belongs to the TrpC family.

It carries out the reaction 1-(2-carboxyphenylamino)-1-deoxy-D-ribulose 5-phosphate + H(+) = (1S,2R)-1-C-(indol-3-yl)glycerol 3-phosphate + CO2 + H2O. The protein operates within amino-acid biosynthesis; L-tryptophan biosynthesis; L-tryptophan from chorismate: step 4/5. This is Indole-3-glycerol phosphate synthase from Pseudomonas fluorescens (strain ATCC BAA-477 / NRRL B-23932 / Pf-5).